Here is a 396-residue protein sequence, read N- to C-terminus: MGTMIRHTFTHRCGALLCALALGSSTMAATAAAKPKKGQMQKLRQRPVWAPTGGRYASLDGAFTALANDASFFEANPAGSANMTHGELAFFHTTGFGSFHAETLSYVGQSGNWGYGASMRMFFPESGFDFSTTTEPVCTPASNPIKQRGAIGIINFARRIGGLSLGANLKAGFRDAQGLQHTSVSSDIGLQWVGNVAKSFTSEEPNLYIGLAATNLGLTVKVSDKIENCTSTCEKCGCCKERCCCNGKKACCKDCDCNCPCQDCNDKGTVHATDTMLRAGFAYRPFSWFLFSLGATTSMNVQTLASSDAKSLYQNLAYSIGAMFDPFSFLSLSSSFRINHKANMRVGVGAEARIARIKLNAGYRCDVSDISSGSGCTGAKASHYLSLGGAILLGRN.

The first 28 residues, Met-1–Ala-28, serve as a signal peptide directing secretion.

This sequence belongs to the UPF0164 family.

This Treponema pallidum (strain Nichols) protein is UPF0164 protein TP_0858.